We begin with the raw amino-acid sequence, 432 residues long: Probable protein phosphatase 2C 75 (432 aa).

One can recognise a PPM-type phosphatase domain in the interval valine 44–leucine 356. Residues aspartate 80, glycine 81, aspartate 301, and aspartate 347 each contribute to the Mn(2+) site. The segment at serine 372–serine 408 is disordered.

Belongs to the PP2C family. Requires Mg(2+) as cofactor. It depends on Mn(2+) as a cofactor.

The catalysed reaction is O-phospho-L-seryl-[protein] + H2O = L-seryl-[protein] + phosphate. The enzyme catalyses O-phospho-L-threonyl-[protein] + H2O = L-threonyl-[protein] + phosphate. The protein is Probable protein phosphatase 2C 75 of Oryza sativa subsp. japonica (Rice).